Reading from the N-terminus, the 241-residue chain is Zinc finger CCHC domain-containing protein 17 (241 aa).

An S1 motif domain is found at 16–88; it reads YTIFQGEVAM…DRIKVSLSMK (73 aa). S114 is subject to Phosphoserine. The CCHC-type zinc finger occupies 131-148; that stretch reads TTCKKCGCKGHFAKDCFM. K144 is subject to N6-acetyllysine. The tract at residues 161–241 is disordered; it reads EEEEKEEAKS…KKKHKKKHKE (81 aa). Basic and acidic residues predominate over residues 166-178; the sequence is EEAKSAEFEKPDP. Positions 182–198 are enriched in basic residues; it reads PSRKRKKEKKKKKHRDR. Phosphoserine is present on S183. The span at 211-225 shows a compositional bias: basic and acidic residues; sequence DTGKRARHTSKDSKA. Positions 226-241 are enriched in basic residues; sequence AKKKKKKKKHKKKHKE.

In terms of assembly, interacts with PNN. Associates with the 60S ribosomal subunit.

The protein resides in the nucleus. It localises to the nucleolus. This Homo sapiens (Human) protein is Zinc finger CCHC domain-containing protein 17 (ZCCHC17).